Reading from the N-terminus, the 464-residue chain is Nuclear distribution protein nudF 2 (464 aa).

Positions 9-41 constitute a LisH domain; it reads QAAELNKSIIAYLSAHGLAETLAAFRKESDFPD. Residues 63–88 adopt a coiled-coil conformation; sequence NSTLMKKLLALESHNKALRNELNSTR. WD repeat units follow at residues 112 to 151, 154 to 195, 199 to 238, 241 to 280, 285 to 343, 344 to 383, 388 to 424, and 426 to 464; these read SHRD…LERT, GHTM…KNVK, GHDH…RVKT, DHTG…PICK, GHEN…MTLT, GHAS…RCVK, AHDG…AELP, and SKLD…RSHK.

Belongs to the WD repeat LIS1/nudF family. As to quaternary structure, self-associates. Interacts with nudE and dynein.

It is found in the cytoplasm. The protein localises to the cytoskeleton. Its subcellular location is the spindle pole. In terms of biological role, positively regulates the activity of the minus-end directed microtubule motor protein dynein. May enhance dynein-mediated microtubule sliding by targeting dynein to the microtubule plus end. Required for nuclear migration during vegetative growth as well as development. Required for retrograde early endosome (EE) transport from the hyphal tip. Required for localization of dynein to the mitotic spindle poles. Recruits additional proteins to the dynein complex at SPBs. The polypeptide is Nuclear distribution protein nudF 2 (Penicillium rubens (strain ATCC 28089 / DSM 1075 / NRRL 1951 / Wisconsin 54-1255) (Penicillium chrysogenum)).